Consider the following 274-residue polypeptide: Lipid phosphate phosphatase 1 (274 aa).

Residues 1 to 15 (MISVMADEKHKEYFK) are Lumenal-facing. A helical membrane pass occupies residues 16–33 (LYYFQYMIIGLCTILFLY). Residues 34 to 69 (SEISLVPRGQNIEFSLDDPSISKRYVPNELVGPLEC) are Cytoplasmic-facing. The helical transmembrane segment at 70 to 87 (LILSVGLSNMVVFWTCMF) threads the bilayer. The Lumenal portion of the chain corresponds to 88–117 (DKDLLKKNRVKRLRERPDGISNDFHFMHTS). The chain crosses the membrane as a helical span at residues 118 to 139 (ILCLMLIISINAALTGALKLII). The tract at residues 136–144 (KLIIGNLRP) is phosphatase sequence motif I. Residues 140 to 189 (GNLRPDFVDRCIPDLQKMSDSDSLVFGLDICKQTNKWILYEGLKSTPSGH) lie on the Cytoplasmic side of the membrane. Residues 186–189 (PSGH) are phosphatase sequence motif II. A helical transmembrane segment spans residues 190–203 (SSFIVSTMGFTYLW). At 204–214 (QRVFTTRNTRS) the chain is on the lumenal side. Residues 215–231 (CIWCPLLALVVMVSRVI) form a helical membrane-spanning segment. The interval 228-239 (SRVIDHRHHWYD) is phosphatase sequence motif III. Topologically, residues 232–237 (DHRHHW) are cytoplasmic. The helical transmembrane segment at 238–255 (YDVVSGAVLAFLVIYCCW) threads the bilayer. The Lumenal portion of the chain corresponds to 256–274 (KWTFTNLAKRDILPSPVSV).

This sequence belongs to the PA-phosphatase related phosphoesterase family.

The protein localises to the golgi apparatus membrane. The catalysed reaction is a 1,2-diacyl-sn-glycerol 3-diphosphate + H2O = a 1,2-diacyl-sn-glycero-3-phosphate + phosphate + H(+). It carries out the reaction a 1,2-diacyl-sn-glycero-3-phosphate + H2O = a 1,2-diacyl-sn-glycerol + phosphate. The enzyme catalyses a 1-acyl-sn-glycero-3-phosphate + H2O = a 1-acyl-sn-glycerol + phosphate. With respect to regulation, PA phosphatase activity is magnesium ion-independent and potently inhibited by N-ethylmaleimide. Also inhibited by phenylglyoxal and propranolol. Its function is as follows. Catalyzes the dephosphorylation of diacylglycerol diphosphate (DGPP) to phosphatidate (PA) and the subsequent dephosphorylation of PA to diacylglycerol (DAG). Together with DPP1, regulates intracellular DGPP and PA levels which are phospholipid molecules believed to play a signaling role in stress response. Can also use lysophosphatidic acid (LPA) as a substrate. Substrate preference is PA &gt; DGPP &gt; LPA. The polypeptide is Lipid phosphate phosphatase 1 (LPP1) (Saccharomyces cerevisiae (strain ATCC 204508 / S288c) (Baker's yeast)).